The primary structure comprises 461 residues: Nuclear distribution protein PAC1 (461 aa).

The 33-residue stretch at 9–41 (QAEELHKSIIAYLTANNLLDTANTLRAELNLNE) folds into the LisH domain. Residues 61 to 88 (TSVVRLQKKIMDLESRMSAMQAELDNAT) are a coiled coil. 8 WD repeats span residues 114–155 (SHRD…RTIK), 157–197 (HTRA…KNIR), 201–248 (GHDH…CLRT), 251–290 (GHTA…PETK), 312–355 (QYLS…LLTL), 357–396 (GHDN…KCIK), 401–446 (AHER…IRCV), and 448–461 (ATGG…IFAN).

It belongs to the WD repeat LIS1/nudF family. As to quaternary structure, self-associates. Interacts with NDL1 and dynein.

It is found in the cytoplasm. Its subcellular location is the cytoskeleton. The protein localises to the spindle pole. Functionally, positively regulates the activity of the minus-end directed microtubule motor protein dynein. May enhance dynein-mediated microtubule sliding by targeting dynein to the microtubule plus end. Required for nuclear migration during vegetative growth as well as development. Required for retrograde early endosome (EE) transport from the hyphal tip. Required for localization of dynein to the mitotic spindle poles. Recruits additional proteins to the dynein complex at SPBs. The protein is Nuclear distribution protein PAC1 of Arthroderma benhamiae (strain ATCC MYA-4681 / CBS 112371) (Trichophyton mentagrophytes).